Reading from the N-terminus, the 504-residue chain is Kinesin light chain 3 (504 aa).

Residues 90 to 150 (ALSAHVGALE…EEEKRHLEFL (61 aa)) adopt a coiled-coil conformation. Residues 153 to 197 (LRQYDPPAESQQSESPPRRDSLASLFPSEEEERKGPEAAGAAAAQ) form a disordered region. Residues 158 to 167 (PPAESQQSES) are compositionally biased toward low complexity. Residue serine 173 is modified to Phosphoserine. 5 TPR repeats span residues 207-240 (LRTLHNLVIQYAGQGRYEVAVPLCRQALEDLERS), 249-282 (ATMLNILALVYRDQNKYKEATDLLHDALQIREQT), 291-324 (AATLNNLAVLYGKRGRYREAEPLCQRALEIREKV), 333-366 (AKQLNNLALLCQNQGKFEDVERHYARALSIYEAL), and 375-408 (AKTKNNLASAYLKQNKYQQAEELYKEILHKEDLP). The segment at 411-438 (LGAPNTGTAGDAEQALRRSSSLSKIRES) is disordered. Residue serine 466 is modified to Phosphoserine. The segment at 472–504 (VDAPRAPGTQFPSWHLDKAPRTLSASTQDLSPH) is disordered. The segment covering 494 to 504 (LSASTQDLSPH) has biased composition (polar residues). A Phosphothreonine modification is found at threonine 498. Phosphoserine is present on serine 502.

The protein belongs to the kinesin light chain family. In terms of assembly, oligomer composed of two heavy chains and two light chains. Associates with microtubulin in an ATP-dependent manner. Interacts with KIF5C. Interacts with ODF1. Interacts with LRGUK. Interacts with VDAC2.

The protein resides in the cytoplasm. It is found in the cytoskeleton. The protein localises to the mitochondrion. Functionally, kinesin is a microtubule-associated force-producing protein that may play a role in organelle transport. Plays a role during spermiogenesis in the development of the sperm tail midpiece and in the normal function of spermatozoa. May play a role in the formation of the mitochondrial sheath formation in the developing spermatid midpiece. The polypeptide is Kinesin light chain 3 (KLC3) (Homo sapiens (Human)).